The primary structure comprises 135 residues: Class I hydrophobin 2 (135 aa).

The N-terminal stretch at 1 to 20 is a signal peptide; the sequence is MFARLTSTLFALAAVSAVFA. 4 cysteine pairs are disulfide-bonded: cysteine 29/cysteine 114, cysteine 36/cysteine 107, cysteine 37/cysteine 73, and cysteine 115/cysteine 128. Asparagine 117 and asparagine 132 each carry an N-linked (GlcNAc...) asparagine glycan.

This sequence belongs to the fungal hydrophobin family. In terms of assembly, self-assembles to form functional amyloid fibrils called rodlets. Self-assembly into fibrillar rodlets occurs spontaneously at hydrophobic:hydrophilic interfaces and the rodlets further associate laterally to form amphipathic monolayers.

It is found in the secreted. Its subcellular location is the cell wall. Aerial growth, conidiation, and dispersal of filamentous fungi in the environment rely upon a capability of their secreting small amphipathic proteins called hydrophobins (HPBs) with low sequence identity. Class I can self-assemble into an outermost layer of rodlet bundles on aerial cell surfaces, conferring cellular hydrophobicity that supports fungal growth, development and dispersal; whereas Class II form highly ordered films at water-air interfaces through intermolecular interactions but contribute nothing to the rodlet structure. This Coprinopsis cinerea (strain Okayama-7 / 130 / ATCC MYA-4618 / FGSC 9003) (Inky cap fungus) protein is Class I hydrophobin 2.